We begin with the raw amino-acid sequence, 140 residues long: Small ribosomal subunit protein uS12 (140 aa).

Disordered regions lie at residues 36 to 56 (TYNPSPYKRGVCTRVGTMTPK) and 117 to 140 (TSGVEKRRQQRSGYGAKRPKEKKE).

This sequence belongs to the universal ribosomal protein uS12 family. In terms of assembly, part of the 30S ribosomal subunit. Contacts proteins S8 and S17. May interact with IF1 in the 30S initiation complex.

In terms of biological role, with S4 and S5 plays an important role in translational accuracy. Functionally, interacts with and stabilizes bases of the 16S rRNA that are involved in tRNA selection in the A site and with the mRNA backbone. Located at the interface of the 30S and 50S subunits, it traverses the body of the 30S subunit contacting proteins on the other side and probably holding the rRNA structure together. The combined cluster of proteins S8, S12 and S17 appears to hold together the shoulder and platform of the 30S subunit. The chain is Small ribosomal subunit protein uS12 from Malacoplasma penetrans (strain HF-2) (Mycoplasma penetrans).